Here is a 633-residue protein sequence, read N- to C-terminus: 1-deoxy-D-xylulose-5-phosphate synthase (633 aa).

Positions 1 to 12 (MSEPTANLQPAS) are enriched in polar residues. The interval 1–21 (MSEPTANLQPASRTPLLDRVN) is disordered. Thiamine diphosphate is bound by residues His-86 and 127 to 129 (GHA). Asp-158 is a Mg(2+) binding site. Thiamine diphosphate contacts are provided by residues 159 to 160 (GS), Asn-187, and Glu-377. Residue Asn-187 coordinates Mg(2+).

The protein belongs to the transketolase family. DXPS subfamily. In terms of assembly, homodimer. It depends on Mg(2+) as a cofactor. The cofactor is thiamine diphosphate.

It carries out the reaction D-glyceraldehyde 3-phosphate + pyruvate + H(+) = 1-deoxy-D-xylulose 5-phosphate + CO2. It functions in the pathway metabolic intermediate biosynthesis; 1-deoxy-D-xylulose 5-phosphate biosynthesis; 1-deoxy-D-xylulose 5-phosphate from D-glyceraldehyde 3-phosphate and pyruvate: step 1/1. Its function is as follows. Catalyzes the acyloin condensation reaction between C atoms 2 and 3 of pyruvate and glyceraldehyde 3-phosphate to yield 1-deoxy-D-xylulose-5-phosphate (DXP). This is 1-deoxy-D-xylulose-5-phosphate synthase from Deinococcus geothermalis (strain DSM 11300 / CIP 105573 / AG-3a).